We begin with the raw amino-acid sequence, 214 residues long: 3-isopropylmalate dehydratase small subunit (214 aa).

Belongs to the LeuD family. LeuD type 1 subfamily. Heterodimer of LeuC and LeuD.

The enzyme catalyses (2R,3S)-3-isopropylmalate = (2S)-2-isopropylmalate. The protein operates within amino-acid biosynthesis; L-leucine biosynthesis; L-leucine from 3-methyl-2-oxobutanoate: step 2/4. Catalyzes the isomerization between 2-isopropylmalate and 3-isopropylmalate, via the formation of 2-isopropylmaleate. The sequence is that of 3-isopropylmalate dehydratase small subunit from Pseudomonas putida (strain ATCC 47054 / DSM 6125 / CFBP 8728 / NCIMB 11950 / KT2440).